The following is a 295-amino-acid chain: Tyrosine recombinase XerC (295 aa).

The Core-binding (CB) domain maps to 1–84 (MTLEEQFLSY…SLKSFYRLLT (84 aa)). The 185-residue stretch at 105-289 (KLPEFFYQDE…SMQHLTAEYR (185 aa)) folds into the Tyr recombinase domain. Residues arginine 145, lysine 169, histidine 241, arginine 244, and histidine 267 contribute to the active site. Tyrosine 276 acts as the O-(3'-phospho-DNA)-tyrosine intermediate in catalysis.

This sequence belongs to the 'phage' integrase family. XerC subfamily. As to quaternary structure, forms a cyclic heterotetrameric complex composed of two molecules of XerC and two molecules of XerD.

The protein localises to the cytoplasm. In terms of biological role, site-specific tyrosine recombinase, which acts by catalyzing the cutting and rejoining of the recombining DNA molecules. The XerC-XerD complex is essential to convert dimers of the bacterial chromosome into monomers to permit their segregation at cell division. It also contributes to the segregational stability of plasmids. This is Tyrosine recombinase XerC from Lactobacillus leichmannii.